Consider the following 549-residue polypeptide: Dihydroxy-acid dehydratase (549 aa).

Mg(2+) is bound at residue D78. Position 119 (C119) interacts with [2Fe-2S] cluster. Mg(2+) contacts are provided by D120 and K121. K121 carries the post-translational modification N6-carboxylysine. Residue C191 participates in [2Fe-2S] cluster binding. A Mg(2+)-binding site is contributed by E441. Residue S466 is the Proton acceptor of the active site.

This sequence belongs to the IlvD/Edd family. Homodimer. Requires [2Fe-2S] cluster as cofactor. Mg(2+) serves as cofactor.

It carries out the reaction (2R)-2,3-dihydroxy-3-methylbutanoate = 3-methyl-2-oxobutanoate + H2O. The enzyme catalyses (2R,3R)-2,3-dihydroxy-3-methylpentanoate = (S)-3-methyl-2-oxopentanoate + H2O. It functions in the pathway amino-acid biosynthesis; L-isoleucine biosynthesis; L-isoleucine from 2-oxobutanoate: step 3/4. The protein operates within amino-acid biosynthesis; L-valine biosynthesis; L-valine from pyruvate: step 3/4. Its function is as follows. Functions in the biosynthesis of branched-chain amino acids. Catalyzes the dehydration of (2R,3R)-2,3-dihydroxy-3-methylpentanoate (2,3-dihydroxy-3-methylvalerate) into 2-oxo-3-methylpentanoate (2-oxo-3-methylvalerate) and of (2R)-2,3-dihydroxy-3-methylbutanoate (2,3-dihydroxyisovalerate) into 2-oxo-3-methylbutanoate (2-oxoisovalerate), the penultimate precursor to L-isoleucine and L-valine, respectively. The sequence is that of Dihydroxy-acid dehydratase from Methanothermobacter thermautotrophicus (strain ATCC 29096 / DSM 1053 / JCM 10044 / NBRC 100330 / Delta H) (Methanobacterium thermoautotrophicum).